The primary structure comprises 261 residues: Global transcriptional regulator CodY (261 aa).

Residues 1–159 (MPNLLEKTRK…ASTVVGIQLL (159 aa)) are GAF domain. Residues 207 to 226 (ASVIADRIGITRSVIVNALR) constitute a DNA-binding region (H-T-H motif).

Belongs to the CodY family.

It is found in the cytoplasm. In terms of biological role, DNA-binding global transcriptional regulator which is involved in the adaptive response to starvation and acts by directly or indirectly controlling the expression of numerous genes in response to nutrient availability. During rapid exponential growth, CodY is highly active and represses genes whose products allow adaptation to nutrient depletion. This Streptococcus agalactiae serotype III (strain NEM316) protein is Global transcriptional regulator CodY.